Here is a 404-residue protein sequence, read N- to C-terminus: Cysteine desulfurase IscS (404 aa).

Pyridoxal 5'-phosphate-binding positions include 75-76, Asn-155, Gln-183, and 203-205; these read AT and SGH. Lys-206 carries the N6-(pyridoxal phosphate)lysine modification. Thr-243 lines the pyridoxal 5'-phosphate pocket. Cys-328 (cysteine persulfide intermediate) is an active-site residue. Cys-328 contacts [2Fe-2S] cluster.

This sequence belongs to the class-V pyridoxal-phosphate-dependent aminotransferase family. NifS/IscS subfamily. In terms of assembly, homodimer. Forms a heterotetramer with IscU, interacts with other sulfur acceptors. Pyridoxal 5'-phosphate serves as cofactor.

It localises to the cytoplasm. It carries out the reaction (sulfur carrier)-H + L-cysteine = (sulfur carrier)-SH + L-alanine. Its pathway is cofactor biosynthesis; iron-sulfur cluster biosynthesis. Master enzyme that delivers sulfur to a number of partners involved in Fe-S cluster assembly, tRNA modification or cofactor biosynthesis. Catalyzes the removal of elemental sulfur atoms from cysteine to produce alanine. Functions as a sulfur delivery protein for Fe-S cluster synthesis onto IscU, an Fe-S scaffold assembly protein, as well as other S acceptor proteins. In Shewanella baltica (strain OS185), this protein is Cysteine desulfurase IscS.